A 122-amino-acid chain; its full sequence is Large ribosomal subunit protein uL14 (122 aa).

This sequence belongs to the universal ribosomal protein uL14 family. As to quaternary structure, part of the 50S ribosomal subunit. Forms a cluster with proteins L3 and L19. In the 70S ribosome, L14 and L19 interact and together make contacts with the 16S rRNA in bridges B5 and B8.

In terms of biological role, binds to 23S rRNA. Forms part of two intersubunit bridges in the 70S ribosome. The sequence is that of Large ribosomal subunit protein uL14 from Chlamydia caviae (strain ATCC VR-813 / DSM 19441 / 03DC25 / GPIC) (Chlamydophila caviae).